We begin with the raw amino-acid sequence, 313 residues long: Formimidoylglutamase (313 aa).

Positions 130, 155, 157, 159, 241, and 243 each coordinate Mn(2+).

This sequence belongs to the arginase family. Requires Mn(2+) as cofactor.

It carries out the reaction N-formimidoyl-L-glutamate + H2O = formamide + L-glutamate. Its pathway is amino-acid degradation; L-histidine degradation into L-glutamate; L-glutamate from N-formimidoyl-L-glutamate (hydrolase route): step 1/1. Its function is as follows. Catalyzes the conversion of N-formimidoyl-L-glutamate to L-glutamate and formamide. This is Formimidoylglutamase from Salmonella paratyphi A (strain ATCC 9150 / SARB42).